We begin with the raw amino-acid sequence, 394 residues long: Chorismate synthase (394 aa).

R62 serves as a coordination point for NADP(+). FMN is bound by residues 144-146 (RAS), G307, 322-326 (KPTPT), and R349.

The protein belongs to the chorismate synthase family. Homotetramer. The cofactor is FMNH2.

The catalysed reaction is 5-O-(1-carboxyvinyl)-3-phosphoshikimate = chorismate + phosphate. It functions in the pathway metabolic intermediate biosynthesis; chorismate biosynthesis; chorismate from D-erythrose 4-phosphate and phosphoenolpyruvate: step 7/7. Its function is as follows. Catalyzes the anti-1,4-elimination of the C-3 phosphate and the C-6 proR hydrogen from 5-enolpyruvylshikimate-3-phosphate (EPSP) to yield chorismate, which is the branch point compound that serves as the starting substrate for the three terminal pathways of aromatic amino acid biosynthesis. This reaction introduces a second double bond into the aromatic ring system. This is Chorismate synthase from Acetivibrio thermocellus (strain ATCC 27405 / DSM 1237 / JCM 9322 / NBRC 103400 / NCIMB 10682 / NRRL B-4536 / VPI 7372) (Clostridium thermocellum).